A 1215-amino-acid chain; its full sequence is MVDVNRFKSMQITLASPNKVRSWSYGEVKKPETINYRTLKPEREGLFDEVIFGPTKDWECACGKYKRIRYKGIVCDRCGVEVTRAKVRRERMGHIELKAPVSHIWYFKGIPSRMGLTLDMSPRALEEVIYFAAYVVIDPKDTPLEHKSIMTEREYRERLREYGAGSFVAKMGAEAIQDLLKQVDLEAEIAVLKEELKTASGQKRIKAVRRLDVLDAFYKSGNKPEWMVLNILPVIPPDLRPMVQLDGGRFAASDLNDLYRRVINRNNRLARLLELNAPGIIVQNEKRMLQEAVDALIDNGRRGRPITGPGSRPLKSLSHMLKGKQGRFRQNLLGKRVDFSGRSVIAVGPTLKMYQCGVPREMAIELFKPFVMREIVARDIVQNVKAAKRLVERGDERIWDILEEVIKEHPVLLNRAPTLHRLGIQAFEPVLIDGKALRLHPLVCEAYNADFDGDQMAIHVPLSEEAQAEARILMLAAEHILNPKDGKPVVTPSQDMVLGNYYLTMEEAGREGEGMIFKDMDEAVMALRNGYVHLHTRVGIATDSLNKPWTEDQKHKILITTVGKILFNAIMPEELPYLQEPTNANLTEGVPAKYFLESGQDIKEVIEQLEINVPFKKKNLGNIIAEIFKRFRTTETSALLDRLKNLGYHHSTLAGLTVGIADIPVVEDKAEIIEESHKRVEQITKQFRRGMITDDERYNAVTAEWRAAREKLEKRLVANQDPKNPIVMMMDSGARGNISNFSQLAGMRGLMAAPNGRIMELPILSNFREGLSVLEMFFSTHGARKGMTDTALKTADSGYLTRRLVDVAQDVIIREDDCGTDRGLLITSITEGKEMIESLEERLNGRYTKKTVKHPETGAVIIGPNELITEDKAREIVNAGVEEVTIRSVFTCNTRHGVCRHCYGINLATGDAVEVGEAVGTIAAQSIGEPGTQLTMRTFHTGGVASNTDITQGLPRVQEIFEARNPKGEAVITEVKGEVTAIEEDASTRTKKVFVKGQTGEGEYVVPFTARMKVEVGDQVSRGAALTEGSIQPKHLLAVRDVLSVETYLLAEVQKVYRSQGVEIGDKHIEVMVRQMIRKVRVMDPGDTDLLMGTLMDITDFTDANRDVVISGGVPATARPVLMGITKASLETNSFLSAASFQETTRVLTDAAIRGKKDHLLGLKENVIIGKIIPAGTGMARYRNLEPQAVNEVEIIDEVTELPDGFETEENIVLK.

Positions 60, 62, 75, and 78 each coordinate Zn(2+). Residues aspartate 450, aspartate 452, and aspartate 454 each coordinate Mg(2+). Residues cysteine 818, cysteine 892, cysteine 899, and cysteine 902 each contribute to the Zn(2+) site.

This sequence belongs to the RNA polymerase beta' chain family. The RNAP catalytic core consists of 2 alpha, 1 beta, 1 beta' and 1 omega subunit. When a sigma factor is associated with the core the holoenzyme is formed, which can initiate transcription. Requires Mg(2+) as cofactor. Zn(2+) serves as cofactor.

It catalyses the reaction RNA(n) + a ribonucleoside 5'-triphosphate = RNA(n+1) + diphosphate. In terms of biological role, DNA-dependent RNA polymerase catalyzes the transcription of DNA into RNA using the four ribonucleoside triphosphates as substrates. The sequence is that of DNA-directed RNA polymerase subunit beta' from Streptococcus sanguinis (strain SK36).